The sequence spans 292 residues: ATP synthase gamma chain (292 aa).

This sequence belongs to the ATPase gamma chain family. In terms of assembly, F-type ATPases have 2 components, CF(1) - the catalytic core - and CF(0) - the membrane proton channel. CF(1) has five subunits: alpha(3), beta(3), gamma(1), delta(1), epsilon(1). CF(0) has three main subunits: a, b and c.

It localises to the cell inner membrane. Produces ATP from ADP in the presence of a proton gradient across the membrane. The gamma chain is believed to be important in regulating ATPase activity and the flow of protons through the CF(0) complex. This chain is ATP synthase gamma chain, found in Methylobacterium sp. (strain 4-46).